Here is a 122-residue protein sequence, read N- to C-terminus: uncharacterized protein (122 aa).

It is found in the mitochondrion. This is an uncharacterized protein from Arabidopsis thaliana (Mouse-ear cress).